The primary structure comprises 382 residues: MTDFLPFSRPTMGDEEIAAVAEVLRSGWITTGPKCQQLEQAFCQQFGCQQAIAVSSATGGMHVTLMALGIGPGDEVITPSQTWVSTVNIITLLGAEPVMVDVDRHTLMVRSQDIEAAITPKTKAIIPVHYAGAPADLDALRALSERYGIPLIEDAAHAVGTQYRGEWIGARGTAIFSFHAIKNITCAEGGMVVTDDEALAERIRSLKFHGLGVDAFDRQLQGRKPQAEVVTPGFKYNLADINAAIALVQLDKLPAINARRQQLAARYLTQLHSLPLQPLAVPDYPHLHAWHLFMVRVDETQCGISRDDLMAALQTHGIGTGLHFRAVHTQKYYRERYPHLHLPETEWNSASLMTLPLFPDMQDSDVDRVVAALTSILESVRD.

Lysine 182 is modified (N6-(pyridoxal phosphate)lysine).

Belongs to the DegT/DnrJ/EryC1 family. ArnB subfamily. Homodimer. The cofactor is pyridoxal 5'-phosphate.

The enzyme catalyses UDP-4-amino-4-deoxy-beta-L-arabinose + 2-oxoglutarate = UDP-beta-L-threo-pentopyranos-4-ulose + L-glutamate. Its pathway is nucleotide-sugar biosynthesis; UDP-4-deoxy-4-formamido-beta-L-arabinose biosynthesis; UDP-4-deoxy-4-formamido-beta-L-arabinose from UDP-alpha-D-glucuronate: step 2/3. It participates in bacterial outer membrane biogenesis; lipopolysaccharide biosynthesis. Catalyzes the conversion of UDP-4-keto-arabinose (UDP-Ara4O) to UDP-4-amino-4-deoxy-L-arabinose (UDP-L-Ara4N). The modified arabinose is attached to lipid A and is required for resistance to polymyxin and cationic antimicrobial peptides. This Pectobacterium atrosepticum (strain SCRI 1043 / ATCC BAA-672) (Erwinia carotovora subsp. atroseptica) protein is UDP-4-amino-4-deoxy-L-arabinose--oxoglutarate aminotransferase.